An 88-amino-acid chain; its full sequence is Small ribosomal subunit protein uS17 (88 aa).

The protein belongs to the universal ribosomal protein uS17 family. Part of the 30S ribosomal subunit.

Its function is as follows. One of the primary rRNA binding proteins, it binds specifically to the 5'-end of 16S ribosomal RNA. In Prochlorococcus marinus (strain NATL1A), this protein is Small ribosomal subunit protein uS17.